We begin with the raw amino-acid sequence, 252 residues long: Pyridoxine 5'-phosphate synthase (252 aa).

Residues Asn8 and Arg19 each contribute to the 3-amino-2-oxopropyl phosphate site. His44 functions as the Proton acceptor in the catalytic mechanism. The 1-deoxy-D-xylulose 5-phosphate site is built by Arg46 and His51. The active-site Proton acceptor is Glu75. Thr110 lines the 1-deoxy-D-xylulose 5-phosphate pocket. His201 acts as the Proton donor in catalysis. Residues Asp202 and 224–225 (GH) each bind 3-amino-2-oxopropyl phosphate.

Belongs to the PNP synthase family. As to quaternary structure, homooctamer; tetramer of dimers.

The protein localises to the cytoplasm. The enzyme catalyses 3-amino-2-oxopropyl phosphate + 1-deoxy-D-xylulose 5-phosphate = pyridoxine 5'-phosphate + phosphate + 2 H2O + H(+). Its pathway is cofactor biosynthesis; pyridoxine 5'-phosphate biosynthesis; pyridoxine 5'-phosphate from D-erythrose 4-phosphate: step 5/5. Functionally, catalyzes the complicated ring closure reaction between the two acyclic compounds 1-deoxy-D-xylulose-5-phosphate (DXP) and 3-amino-2-oxopropyl phosphate (1-amino-acetone-3-phosphate or AAP) to form pyridoxine 5'-phosphate (PNP) and inorganic phosphate. In Albidiferax ferrireducens (strain ATCC BAA-621 / DSM 15236 / T118) (Rhodoferax ferrireducens), this protein is Pyridoxine 5'-phosphate synthase.